We begin with the raw amino-acid sequence, 705 residues long: Ribosomal RNA large subunit methyltransferase K/L (705 aa).

Residues 43 to 154 form the THUMP domain; it reads VVYRCCLWSR…GEKGILGFDL (112 aa).

It belongs to the methyltransferase superfamily. RlmKL family.

The protein resides in the cytoplasm. The enzyme catalyses guanosine(2445) in 23S rRNA + S-adenosyl-L-methionine = N(2)-methylguanosine(2445) in 23S rRNA + S-adenosyl-L-homocysteine + H(+). The catalysed reaction is guanosine(2069) in 23S rRNA + S-adenosyl-L-methionine = N(2)-methylguanosine(2069) in 23S rRNA + S-adenosyl-L-homocysteine + H(+). Functionally, specifically methylates the guanine in position 2445 (m2G2445) and the guanine in position 2069 (m7G2069) of 23S rRNA. This Aliivibrio salmonicida (strain LFI1238) (Vibrio salmonicida (strain LFI1238)) protein is Ribosomal RNA large subunit methyltransferase K/L.